We begin with the raw amino-acid sequence, 341 residues long: Vacuolar morphogenesis protein 7 homolog (341 aa).

The 115-residue stretch at 1-115 (MALKIKIPET…KFLNIKDESE (115 aa)) folds into the PX domain. Residues 214-233 (NSPVAPPSASSQLNSSNPSS) show a composition bias toward low complexity. The disordered stretch occupies residues 214–265 (NSPVAPPSASSQLNSSNPSSPFRPLSASTDKQSNTSLNRVLGKNRMPETQTT). Positions 239 to 251 (SASTDKQSNTSLN) are enriched in polar residues. The t-SNARE coiled-coil homology domain occupies 278–340 (NQTMEDQDMQ…HRTRAGLRKL (63 aa)).

Possibly multimeric.

It localises to the vacuole. Functionally, essential for proper morphogenesis of the vacuole. May exist as structural reinforcement on the surface of the vacuolar membrane and be required for maintenance against rupture by osmotic pressure. This chain is Vacuolar morphogenesis protein 7 homolog, found in Schizosaccharomyces pombe (strain 972 / ATCC 24843) (Fission yeast).